The following is a 210-amino-acid chain: MTNLEQQLSQKLEILLKQTALSITDQQKEQLIKLVLLLNKWNKAYNLTSVRDPMEMLVKHILDSVVVSPHLQGKHFIDVGTGPGLPGLPLAIVNPNKHFVLLDSLGKRISFIRNAIRELGLDNVEAVLSRVEEYHPEQPFDGVLSRAFASLKDMTDWCQHLPKQDGYFYALKGLYHQEEVEELSEKFTIQQVIRLQVPELIGERHLVIVK.

S-adenosyl-L-methionine is bound by residues glycine 80, leucine 85, 131–132, and arginine 146; that span reads VE.

This sequence belongs to the methyltransferase superfamily. RNA methyltransferase RsmG family.

It is found in the cytoplasm. The enzyme catalyses guanosine(527) in 16S rRNA + S-adenosyl-L-methionine = N(7)-methylguanosine(527) in 16S rRNA + S-adenosyl-L-homocysteine. Its function is as follows. Specifically methylates the N7 position of guanine in position 527 of 16S rRNA. The chain is Ribosomal RNA small subunit methyltransferase G from Pasteurella multocida (strain Pm70).